Reading from the N-terminus, the 190-residue chain is MLYLASRSPRRQELLQRLDVPFQTVQLDVPELRAADESPDHYVQRVALDKAHAGLALVQAADPDAIVLGSDTEVVLGERVFGKPVDVDDAIAMLRALSGRTHQVLTAVVLVCAQRAPAQALVVSEVTFDRLDDAQIAAYAACGEPMGKAGAYAIQGRAERFIRHLSGSYSGVMGLPLYHTSQLLTAFGAH.

Catalysis depends on Asp-71, which acts as the Proton acceptor.

The protein belongs to the Maf family. YhdE subfamily. A divalent metal cation serves as cofactor.

The protein resides in the cytoplasm. It catalyses the reaction dTTP + H2O = dTMP + diphosphate + H(+). The enzyme catalyses UTP + H2O = UMP + diphosphate + H(+). Its function is as follows. Nucleoside triphosphate pyrophosphatase that hydrolyzes dTTP and UTP. May have a dual role in cell division arrest and in preventing the incorporation of modified nucleotides into cellular nucleic acids. This Xanthomonas oryzae pv. oryzae (strain MAFF 311018) protein is dTTP/UTP pyrophosphatase.